The primary structure comprises 157 residues: Capsid protein (157 aa).

S2 is modified (N-acetylserine; by host).

The protein belongs to the virgaviridae capsid protein family.

It localises to the virion. In terms of biological role, capsid protein self-assembles to form rod-shaped virions about 18 nm in diameter with a central canal enclosing the viral genomic RNA. The chain is Capsid protein (CP) from Digitalis lanata (Grecian foxglove).